A 393-amino-acid polypeptide reads, in one-letter code: Cyclic GMP-AMP synthase-like receptor 1 (393 aa).

The Mg(2+) site is built by glutamate 89, aspartate 91, and aspartate 205. 89-91 (EFD) contacts ATP. GTP is bound by residues aspartate 205 and 251 to 258 (RASFYEAE). Residues 255–258 (YEAE), lysine 276, and 289–293 (SYHIK) each bind ATP.

Belongs to the mab-21 family. It depends on Mg(2+) as a cofactor. Mn(2+) is required as a cofactor.

The catalysed reaction is GTP + ATP = 3',2'-cGAMP + 2 diphosphate. It carries out the reaction GTP + ATP = pppA(2'-5')pG + diphosphate. The enzyme catalyses pppA(2'-5')pG = 3',2'-cGAMP + diphosphate. The enzyme activity is specifically activated by double-stranded RNA (dsRNA). Recognizes long dsRNA (&gt;30 bp) with no preference for 5' RNA phosphorylation. In terms of biological role, nucleotidyltransferase that catalyzes the formation of cyclic GMP-AMP (3',2'-cGAMP) from ATP and GTP and plays a key role in innate immunity. Synthesizes 3',2'-cGAMP in a two-step reaction through production of the linear intermediate pppA(2'-5')pG. Acts as a key sensor of double-stranded RNA (dsRNA), the presence of dsRNA in the cytoplasm being a danger signal that triggers the immune responses. Directly binds dsRNA longer than 35 bp, activating the nucleotidyltransferase activity, leading to synthesis of 3',2'-cGAMP, a second messenger that binds to and activates Sting, thereby triggering the antiviral immune response via activation of the NF-kappa-B transcription factor Rel (Relish). In Drosophila simulans (Fruit fly), this protein is Cyclic GMP-AMP synthase-like receptor 1.